Consider the following 1065-residue polypeptide: Tubulin glycylase 3C (1065 aa).

6 disordered regions span residues 1-146, 158-182, 301-326, 341-360, 381-482, and 708-755; these read MSSL…REDK, IREQKEVNLESQTEQSDHSNVTKSK, STQKQLVRASSAEGDKEKDDKKDIAK, EKKRQEIAKEEEEKKKKEQL, FFVD…GNGS, and NKQK…EKQM. The span at 23 to 53 shows a compositional bias: low complexity; the sequence is QEGNQEDLNNQNDHNLNNNELDSLSSPPSDN. A compositionally biased stretch (acidic residues) spans 54–63; that stretch reads YNEEEFEQED. The segment covering 73 to 92 has biased composition (polar residues); that stretch reads QNASQNNISQTQRISQTQLP. A compositionally biased stretch (basic and acidic residues) spans 122 to 146; the sequence is LMEKKKKEQEEKEKKELKLKKREDK. A compositionally biased stretch (polar residues) spans 166–179; it reads LESQTEQSDHSNVT. Over residues 313–326 the composition is skewed to basic and acidic residues; that stretch reads EGDKEKDDKKDIAK. Positions 385–403 are enriched in basic and acidic residues; it reads VPEKKPKKEKKKNESKEDN. Residues 404–423 are compositionally biased toward polar residues; that stretch reads IQITSPKLNSTKSLSSQITR. The segment covering 424 to 450 has biased composition (basic and acidic residues); that stretch reads KTNDAKKVEKLPKIKDSNKENHSKERN. The segment covering 451 to 479 has biased composition (acidic residues); the sequence is EDNEEGDDGEYECDEGDEGASDGEDEDDG. The 377-residue stretch at 633-1009 folds into the TTL domain; that stretch reads YFEKDPDIEK…DYGMEKSKKA (377 aa). Residues 709-721 show a composition bias toward basic residues; it reads KQKPKKKKKKSKK. Residues 722 to 733 are compositionally biased toward basic and acidic residues; that stretch reads DKQQGDTEKKEE. The span at 734–754 shows a compositional bias: acidic residues; sequence EEGEAEDEEEDEEDEEEEEKQ. ATP-binding positions include 821 to 824, Lys-834, and Asp-836; that span reads QKYI.

The protein resides in the cell projection. The protein localises to the cilium. It localises to the cytoplasm. Its subcellular location is the cytoskeleton. It is found in the cilium axoneme. In terms of biological role, probable glycylase which modifies tubulin, generating side chains of glycine on the gamma-carboxyl groups of specific glutamate residues within the C-terminal tail of tubulin. The chain is Tubulin glycylase 3C (TTLL3C) from Tetrahymena thermophila (strain SB210).